Here is a 391-residue protein sequence, read N- to C-terminus: Choline/ethanolaminephosphotransferase 1 (391 aa).

The Lumenal segment spans residues 1–49; that stretch reads MGYFVPDSHIENLKSYKYQSEDRSLVSKYFLKPFWQRFCHIFPTWMAPN. The helical transmembrane segment at 50 to 69 threads the bilayer; sequence IITLSGFAFIVINVLTVFYY. Over 70 to 172 the chain is Cytoplasmic; that stretch reads DPNLNTDTPR…YHTHTLYLSE (103 aa). The helical transmembrane segment at 173-193 threads the bilayer; the sequence is FSGPVEGILIVCVSLILTGIY. The Lumenal segment spans residues 194 to 211; it reads GKQVIWHTYLFTITVGDK. Residues 212–232 traverse the membrane as a helical segment; the sequence is VIDVDTLDIVFSLAVFGLVMN. The Cytoplasmic segment spans residues 233 to 264; sequence ALSAKRNVDKYYRNSTSSANNITQIEQDSAIK. Residues 265-282 traverse the membrane as a helical segment; the sequence is GLLPFFAYYASIALLVWM. Over 283–285 the chain is Lumenal; the sequence is QPS. A helical transmembrane segment spans residues 286 to 308; that stretch reads FITLSFILSVGFTGAFTVGRIIV. Topologically, residues 309–321 are cytoplasmic; the sequence is CHLTKQSFPMFNA. The helical transmembrane segment at 322–342 threads the bilayer; sequence PMLIPLCQIVLYKICLSLWGI. Topologically, residues 343-346 are lumenal; that stretch reads ESNK. Residues 347 to 367 traverse the membrane as a helical segment; sequence IVFALSWLGFGLSLGVHIMFM. Residues 368 to 391 are Cytoplasmic-facing; sequence NDIIHEFTEYLDVYALSIKRSKLT.

The protein belongs to the CDP-alcohol phosphatidyltransferase class-I family. Mg(2+) is required as a cofactor.

The protein resides in the golgi apparatus membrane. The enzyme catalyses CDP-ethanolamine + a 1,2-diacyl-sn-glycerol = a 1,2-diacyl-sn-glycero-3-phosphoethanolamine + CMP + H(+). It catalyses the reaction CDP-choline + a 1,2-diacyl-sn-glycerol = a 1,2-diacyl-sn-glycero-3-phosphocholine + CMP + H(+). The catalysed reaction is CDP-N-methylethanolamine + a 1,2-diacyl-sn-glycerol = a 1,2-diacyl-sn-glycero-3-phospho-N-methylethanolamine + CMP + H(+). It carries out the reaction CDP-N,N-dimethylethanolamine + a 1,2-diacyl-sn-glycerol = a 1,2-diacyl-sn-glycero-3-phospho-N,N-dimethylethanolamine + CMP + H(+). The enzyme catalyses 1,2-di-(9Z-octadecenoyl)-glycerol + CDP-choline = 1,2-di-(9Z-octadecenoyl)-sn-glycero-3-phosphocholine + CMP + H(+). It catalyses the reaction 1,2-di-(9Z-octadecenoyl)-glycerol + CDP-ethanolamine = 1,2-di-(9Z-octadecenoyl)-sn-glycero-3-phosphoethanolamine + CMP + H(+). The protein operates within phospholipid metabolism; phosphatidylethanolamine biosynthesis; phosphatidylethanolamine from ethanolamine: step 3/3. It participates in phospholipid metabolism; phosphatidylcholine biosynthesis; phosphatidylcholine from phosphocholine: step 2/2. Requires a divalent cation activator, and is inhibited by CMP. Activated by phospholipids, especially phosphatidylcholine. Catalyzes the final step in the CDP-ethanolamine route leading to phosphatidylethanolamine (PE). Can also catalyze the formation of phosphatidylcholine (PC) from CDP-choline, but does not substantially contribute to PC biosynthesis. Preferentially uses CDP-dimethylethanolamine and CDP-propanolamine as aminoalcohol substrates. Shows highest activity toward di-unsaturated diacylglycerol species as lipid substrates. The CDP-ethanolamine pathway may play a role in maintaining the proper PE species distribution. This is Choline/ethanolaminephosphotransferase 1 (EPT1) from Saccharomyces cerevisiae (strain ATCC 204508 / S288c) (Baker's yeast).